Here is a 70-residue protein sequence, read N- to C-terminus: Conotoxin TsMLKM-011 (70 aa).

An N-terminal signal peptide occupies residues 1-24; that stretch reads MLKMGVVLFVFLVLFPLATLQLDA. A propeptide spanning residues 25–54 is cleaved from the precursor; it reads DQPVERYAENKQLVSPYERRQIILHALGQR. 3 cysteine pairs are disulfide-bonded: Cys56–Cys66, Cys57–Cys68, and Cys62–Cys69.

It belongs to the conotoxin M superfamily. In terms of tissue distribution, expressed by the venom duct.

Its subcellular location is the secreted. This Conus tessulatus (Tessellate cone) protein is Conotoxin TsMLKM-011.